A 157-amino-acid chain; its full sequence is 6,7-dimethyl-8-ribityllumazine synthase (157 aa).

5-amino-6-(D-ribitylamino)uracil contacts are provided by residues phenylalanine 22, 57-59 (AYE), and 81-83 (TVI). (2S)-2-hydroxy-3-oxobutyl phosphate is bound at residue 86-87 (GT). The active-site Proton donor is the histidine 89. Phenylalanine 114 serves as a coordination point for 5-amino-6-(D-ribitylamino)uracil. Arginine 128 contacts (2S)-2-hydroxy-3-oxobutyl phosphate.

This sequence belongs to the DMRL synthase family. As to quaternary structure, forms an icosahedral capsid composed of 60 subunits, arranged as a dodecamer of pentamers.

The catalysed reaction is (2S)-2-hydroxy-3-oxobutyl phosphate + 5-amino-6-(D-ribitylamino)uracil = 6,7-dimethyl-8-(1-D-ribityl)lumazine + phosphate + 2 H2O + H(+). Its pathway is cofactor biosynthesis; riboflavin biosynthesis; riboflavin from 2-hydroxy-3-oxobutyl phosphate and 5-amino-6-(D-ribitylamino)uracil: step 1/2. Functionally, catalyzes the formation of 6,7-dimethyl-8-ribityllumazine by condensation of 5-amino-6-(D-ribitylamino)uracil with 3,4-dihydroxy-2-butanone 4-phosphate. This is the penultimate step in the biosynthesis of riboflavin. In Haemophilus influenzae (strain ATCC 51907 / DSM 11121 / KW20 / Rd), this protein is 6,7-dimethyl-8-ribityllumazine synthase.